A 489-amino-acid polypeptide reads, in one-letter code: Mitochondrial-processing peptidase subunit beta (489 aa).

The N-terminal 43 residues, 1–43 (MAAAAARVVLSSAARRRLWGFSESLLIRGAAGRSLYFGENRLR), are a transit peptide targeting the mitochondrion. Position 101 (H101) interacts with Zn(2+). E104 (proton acceptor) is an active-site residue. H105 and E181 together coordinate Zn(2+).

Belongs to the peptidase M16 family. As to quaternary structure, heterodimer of PMPCA (alpha) and PMPCB (beta) subunits, forming the mitochondrial processing protease (MPP) in which PMPCA is involved in substrate recognition and binding and PMPCB is the catalytic subunit. Zn(2+) serves as cofactor.

The protein resides in the mitochondrion matrix. The enzyme catalyses Release of N-terminal transit peptides from precursor proteins imported into the mitochondrion, typically with Arg in position P2.. With respect to regulation, binding to PMPCA is required for catalytic activity. Its function is as follows. Catalytic subunit of the essential mitochondrial processing protease (MPP), which cleaves the mitochondrial sequence off newly imported precursors proteins. Preferentially, cleaves after an arginine at position P2. Required for PINK1 turnover by coupling PINK1 mitochondrial import and cleavage, which results in subsequent PINK1 proteolysis. The polypeptide is Mitochondrial-processing peptidase subunit beta (PMPCB) (Homo sapiens (Human)).